Consider the following 370-residue polypeptide: MKKKRVVVGMSGGVDSSVAAYLLKQEGYDVIGVFMKNWDDTNDDGVCTATEDYEDVKRVANQLGIPYYSVNFEKEYWDRVFTYFIDELKRGRTPNPDVLCNTEIKFKAFVDYALSLDADYIATGHYARINRENGQIALLRGKDPNKDQTYFLSQLTAEHLSKVLFPIGELTKDEVRKIAQELNLVNANKKDSTGICFIGERNFKNFLKNYLPAQPGEIRSLDGEVLGTHDGLMYYTIGQRKGLGIGGKGTGEPWYVVDKDLENNVLLVAQGKNHPALFSTGLIASNISFINGDVRPRTFACTAKFRYRQEDQKVTVHIRPNGTAFVEFEKPVKAVTPGQVAVFYDNDVCLGSAIIDEVIKMDASTATAAS.

ATP-binding positions include 9 to 16 (GMSGGVDS) and Met35. The segment at 95 to 97 (NPD) is interaction with target base in tRNA. Catalysis depends on Cys100, which acts as the Nucleophile. The cysteines at positions 100 and 196 are disulfide-linked. Gly124 provides a ligand contact to ATP. Residues 146–148 (KDQ) are interaction with tRNA. The active-site Cysteine persulfide intermediate is Cys196. The interaction with tRNA stretch occupies residues 306–307 (RY).

Belongs to the MnmA/TRMU family.

The protein resides in the cytoplasm. It catalyses the reaction S-sulfanyl-L-cysteinyl-[protein] + uridine(34) in tRNA + AH2 + ATP = 2-thiouridine(34) in tRNA + L-cysteinyl-[protein] + A + AMP + diphosphate + H(+). In terms of biological role, catalyzes the 2-thiolation of uridine at the wobble position (U34) of tRNA, leading to the formation of s(2)U34. The chain is tRNA-specific 2-thiouridylase MnmA 1 from Geobacillus kaustophilus (strain HTA426).